A 364-amino-acid chain; its full sequence is Ribosomal RNA small subunit methyltransferase H (364 aa).

S-adenosyl-L-methionine-binding positions include glycine 55–histidine 57, aspartate 75, phenylalanine 101, aspartate 122, and glutamine 129. A disordered region spans residues leucine 333–arginine 364.

The protein belongs to the methyltransferase superfamily. RsmH family.

The protein localises to the cytoplasm. It catalyses the reaction cytidine(1402) in 16S rRNA + S-adenosyl-L-methionine = N(4)-methylcytidine(1402) in 16S rRNA + S-adenosyl-L-homocysteine + H(+). Specifically methylates the N4 position of cytidine in position 1402 (C1402) of 16S rRNA. The protein is Ribosomal RNA small subunit methyltransferase H of Bordetella bronchiseptica (strain ATCC BAA-588 / NCTC 13252 / RB50) (Alcaligenes bronchisepticus).